A 548-amino-acid polypeptide reads, in one-letter code: Chaperonin GroEL (548 aa).

ATP is bound by residues 30–33, lysine 51, 87–91, glycine 415, and aspartate 496; these read TLGP and DGTTT.

Belongs to the chaperonin (HSP60) family. As to quaternary structure, forms a cylinder of 14 subunits composed of two heptameric rings stacked back-to-back. Interacts with the co-chaperonin GroES.

The protein localises to the cytoplasm. It catalyses the reaction ATP + H2O + a folded polypeptide = ADP + phosphate + an unfolded polypeptide.. Its function is as follows. Together with its co-chaperonin GroES, plays an essential role in assisting protein folding. The GroEL-GroES system forms a nano-cage that allows encapsulation of the non-native substrate proteins and provides a physical environment optimized to promote and accelerate protein folding. In Haemophilus influenzae (strain PittGG), this protein is Chaperonin GroEL.